The primary structure comprises 440 residues: Tryptophan synthase beta chain 2 (440 aa).

Lys110 carries the N6-(pyridoxal phosphate)lysine modification.

It belongs to the TrpB family. As to quaternary structure, tetramer of two alpha and two beta chains. Pyridoxal 5'-phosphate serves as cofactor.

The enzyme catalyses (1S,2R)-1-C-(indol-3-yl)glycerol 3-phosphate + L-serine = D-glyceraldehyde 3-phosphate + L-tryptophan + H2O. The protein operates within amino-acid biosynthesis; L-tryptophan biosynthesis; L-tryptophan from chorismate: step 5/5. Functionally, the beta subunit is responsible for the synthesis of L-tryptophan from indole and L-serine. The sequence is that of Tryptophan synthase beta chain 2 (trpB2) from Pyrococcus abyssi (strain GE5 / Orsay).